We begin with the raw amino-acid sequence, 445 residues long: Xylose isomerase (445 aa).

Catalysis depends on residues His-107 and Asp-110. Mg(2+)-binding residues include Glu-238, Glu-274, His-277, Asp-302, Asp-313, Asp-315, and Asp-345.

It belongs to the xylose isomerase family. Homotetramer. It depends on Mg(2+) as a cofactor.

It is found in the cytoplasm. The catalysed reaction is alpha-D-xylose = alpha-D-xylulofuranose. This is Xylose isomerase from Bacillus pumilus (strain SAFR-032).